A 318-amino-acid polypeptide reads, in one-letter code: ATP phosphoribosyltransferase regulatory subunit (318 aa).

Belongs to the class-II aminoacyl-tRNA synthetase family. HisZ subfamily. In terms of assembly, heteromultimer composed of HisG and HisZ subunits.

It localises to the cytoplasm. Its pathway is amino-acid biosynthesis; L-histidine biosynthesis; L-histidine from 5-phospho-alpha-D-ribose 1-diphosphate: step 1/9. Functionally, required for the first step of histidine biosynthesis. May allow the feedback regulation of ATP phosphoribosyltransferase activity by histidine. In Lactococcus lactis subsp. cremoris (strain MG1363), this protein is ATP phosphoribosyltransferase regulatory subunit.